A 1876-amino-acid chain; its full sequence is Phenolphthiocerol/phthiocerol polyketide synthase subunit A (1876 aa).

The region spanning 9–83 (ADLRHWLIDY…ALAAYLAAPE (75 aa)) is the Carrier 1 domain. Ser-43 carries the O-(pantetheine 4'-phosphoryl)serine modification. The Ketosynthase family 3 (KS3) domain maps to 101 to 526 (DEPIAVVGMG…GTNAHVVIEQ (426 aa)). Catalysis depends on for beta-ketoacyl synthase activity residues Cys-273, His-408, and His-448. The interval 624–950 (EGSPGPGTVF…NLNKAHTIHP (327 aa)) is acyltransferase. The active-site For malonyltransferase activity is the Ser-720. The segment at 997–1112 (HTTVATVSAS…AQLSSSPSDS (116 aa)) is N-terminal hotdog fold. One can recognise a PKS/mFAS DH domain in the interval 997-1267 (HTTVATVSAS…YRALDFGLDV (271 aa)). The active-site Proton acceptor; for dehydratase activity is the His-1027. The interval 1104–1130 (QLSSSPSDSASSLNEHHRANGQPPERA) is disordered. Residues 1106–1115 (SSSPSDSASS) are compositionally biased toward low complexity. The interval 1130–1267 (AHRDLIPDLA…YRALDFGLDV (138 aa)) is C-terminal hotdog fold. The active-site Proton donor; for dehydratase activity is Asp-1186. The tract at residues 1491-1728 (AAYLITGGLG…DGYDVAQAVV (238 aa)) is beta-ketoacyl reductase. An NADP(+)-binding site is contributed by 1492 to 1551 (AYLITGGLGALGLLMADWLADRGAHRLVLTGRTPLPPRRDWQLDTLDTELRRRIDAIRAL). The 78-residue stretch at 1759 to 1836 (EVRSELEQGL…SLASYLAKRV (78 aa)) folds into the Carrier 2 domain. Ser-1796 bears the O-(pantetheine 4'-phosphoryl)serine mark.

NADP(+) is required as a cofactor. It depends on pantetheine 4'-phosphate as a cofactor.

The catalysed reaction is icosanoyl-[(phenol)carboxyphthiodiolenone synthase] + 2 (S)-methylmalonyl-CoA + 3 malonyl-CoA + 5 NADPH + 10 H(+) = C32-carboxyphthiodiolenone-[(phenol)carboxyphthiodiolenone synthase] + 5 CO2 + 5 NADP(+) + 5 CoA + 2 H2O. The enzyme catalyses docosanoyl-[(phenol)carboxyphthiodiolenone synthase] + 2 (S)-methylmalonyl-CoA + 3 malonyl-CoA + 5 NADPH + 10 H(+) = C34-carboxyphthiodiolenone-[(phenol)carboxyphthiodiolenone synthase] + 5 CO2 + 5 NADP(+) + 5 CoA + 2 H2O. It carries out the reaction 17-(4-hydroxyphenyl)heptadecanoyl-[(phenol)carboxyphthiodiolenone synthase] + 2 (S)-methylmalonyl-CoA + 3 malonyl-CoA + 5 NADPH + 10 H(+) = C35-(phenol)carboxyphthiodiolenone-[(phenol)carboxyphthiodiolenone synthase] + 5 CO2 + 5 NADP(+) + 5 CoA + 2 H2O. It catalyses the reaction 19-(4-hydroxyphenyl)nonadecanoyl-[(phenol)carboxyphthiodiolenone synthase] + 2 (S)-methylmalonyl-CoA + 3 malonyl-CoA + 5 NADPH + 10 H(+) = C37-(phenol)carboxyphthiodiolenone-[(phenol)carboxyphthiodiolenone synthase] + 5 CO2 + 5 NADP(+) + 5 CoA + 2 H2O. It participates in lipid metabolism; fatty acid biosynthesis. In terms of biological role, part of the PpsABCDE complex involved in the biosynthesis of the lipid core common to phthiocerols and phenolphthiocerols by successive additions of malonyl-CoA or methylmalonyl-CoA extender units. PpsA can accept as substrate the activated forms of either icosanoyl (C20), docosanoyl (C22) or lignoceroyl (C24) groups from FadD26, or a (4-hydroxyphenyl)-C17 or (4-hydroxyphenyl)-C19 fatty acyl from FadD29. PpsA initiates the biosynthesis and extends its substrate using a malonyl-CoA extender unit. The PpsB and PpsC proteins add the second and third malonyl-CoA extender units. PpsD adds an (R)-methylmalonyl unit and PpsE adds a second (R)-methylmalonyl unit. The incorporation of the methylmalonyl units results in formation of two branched methyl groups in the elongated product. This is Phenolphthiocerol/phthiocerol polyketide synthase subunit A (ppsA) from Mycobacterium bovis (strain ATCC BAA-935 / AF2122/97).